Consider the following 763-residue polypeptide: Exo-1,4-beta-xylosidase bxlB (763 aa).

Positions Met1–Ser23 are cleaved as a signal peptide. Residue Asn63 is glycosylated (N-linked (GlcNAc...) asparagine). Asp288 is a catalytic residue. 6 N-linked (GlcNAc...) asparagine glycosylation sites follow: Asn340, Asn408, Asn419, Asn458, Asn621, and Asn760.

Belongs to the glycosyl hydrolase 3 family.

It localises to the secreted. The catalysed reaction is Hydrolysis of (1-&gt;4)-beta-D-xylans, to remove successive D-xylose residues from the non-reducing termini.. The protein operates within glycan degradation; xylan degradation. Xylan 1,4-beta-xylosidase involved in the hydrolysis of xylan, a major structural heterogeneous polysaccharide found in plant biomass representing the second most abundant polysaccharide in the biosphere, after cellulose. Active against rye arabinoxylan and xylohexaose, but not paranitrophenyl-beta-xyloside. In Emericella nidulans (strain FGSC A4 / ATCC 38163 / CBS 112.46 / NRRL 194 / M139) (Aspergillus nidulans), this protein is Exo-1,4-beta-xylosidase bxlB (bxlB).